The primary structure comprises 528 residues: Cytochrome P450 monooxygenase vrcB (528 aa).

A helical transmembrane segment spans residues 5-27 (YGLFFAAVALYSVALVIYRLYLH). Cys470 is a heme binding site.

This sequence belongs to the cytochrome P450 family. It depends on heme as a cofactor.

The protein localises to the membrane. The catalysed reaction is variecoladiene + 4 reduced [NADPH--hemoprotein reductase] + 4 O2 = variecolin + 4 oxidized [NADPH--hemoprotein reductase] + 6 H2O + 4 H(+). It participates in secondary metabolite biosynthesis; terpenoid biosynthesis. Its function is as follows. Cytochrome P450 monooxygenase; part of the gene cluster that mediates the biosynthesis of the sesterterpene variecolin. The first step in the pathway is performed by the variecoladiene synthase vrcA that possesses both prenyl transferase and terpene cyclase activity, converting isopentenyl diphosphate and dimethylallyl diphosphate into geranylfarnesyl pyrophosphate (GFPP) and then converting GFPP into the tetracyclic variecoladiene. The cytochrome P450 monooxygenase vrcB then catalyzes multiple oxidations at C-5 and C-20 positions to yield variecolin. This chain is Cytochrome P450 monooxygenase vrcB, found in Aspergillus aculeatus (strain ATCC 16872 / CBS 172.66 / WB 5094).